We begin with the raw amino-acid sequence, 764 residues long: Nucleolar transcription factor 1 (764 aa).

N-acetylmethionine is present on M1. The interval 1–21 is disordered; the sequence is MNGEADCPTDLEMAAPKGQDR. DNA-binding regions (HMG box) lie at residues 112–180 and 196–264; these read PKKP…ARFR and PEKP…RDYI. T201 carries the phosphothreonine modification. Residues S273, S336, and S364 each carry the phosphoserine modification. A DNA-binding region (HMG box 3) is located at residues 298–362; that stretch reads TKPPPNSYSL…DYEVELLRFL (65 aa). The segment covering 370–379 has biased composition (basic and acidic residues); that stretch reads QQRVLGEEKM. The disordered stretch occupies residues 370–411; that stretch reads QQRVLGEEKMLNINKKQTTSPASKKPSQEGGKGGSEKPKRPV. Residues S389, S412, S433, S435, S484, S495, S546, S584, and S638 each carry the phosphoserine modification. 3 DNA-binding regions (HMG box) span residues 407 to 475, 482 to 549, and 568 to 634; these read PKRP…GGER, PESP…SEMR, and KKPP…DLWV. The interval 456–488 is disordered; that stretch reads YKAREAALKAQSERKPGGEREDRGKLPESPKRA. Basic and acidic residues predominate over residues 457 to 488; the sequence is KAREAALKAQSERKPGGEREDRGKLPESPKRA. The disordered stretch occupies residues 546–576; that stretch reads SEMRAPPAATNSSKKMKFQGEPKKPPMNGYQ. Residues 648-764 form a disordered region; the sequence is YISNKRKNMT…SGDSSDSDSN (117 aa). Polar residues predominate over residues 664–674; the sequence is PKSSRTTLQSK. Residues 677–745 show a composition bias toward acidic residues; it reads SEEDDDEEDD…DDDEDEDNES (69 aa). The span at 746 to 758 shows a compositional bias: low complexity; it reads EGSSSSSSSSGDS.

As to quaternary structure, homodimer. Part of Pol I pre-initiation complex (PIC), in which Pol I core assembles with RRN3 and promoter-bound UTBF and SL1/TIF-IB complex. Interacts with TOP2A in the context of Pol I complex. Interacts with TBP. Interacts with TAF1A. Interacts with PHF6. Interacts with CEBPA (isoform 1 and isoform 4). Interacts with DDX11. Interacts with NOP53. Interacts with RASL11A. Interacts with DHX33. Binds to IRS1 and PIK3CA. Interacts with ALKBH2. Post-translationally, phosphorylated and activated by PIK3CA.

The protein localises to the nucleus. It is found in the nucleolus. Functionally, recognizes the ribosomal RNA gene promoter and activates transcription mediated by RNA polymerase I through cooperative interactions with the transcription factor SL1/TIF-IB complex. It binds specifically to the upstream control element. This is Nucleolar transcription factor 1 (Ubtf) from Rattus norvegicus (Rat).